Here is a 1015-residue protein sequence, read N- to C-terminus: Protein HIRA (1015 aa).

WD repeat units lie at residues 11-53 (HNGK…QEDD) and 68-107 (NHLACVNCVRWSNSGMYLASGGDDKLIMVWKRATYIGPST). Position 111 is a phosphoserine (Ser111). WD repeat units lie at residues 129-168 (SHSGDVMDVAWSPHDAWLASCSVDNTVVIWNAVKFPEILA), 172-211 (GHSGLVKGLTWDPVGKYIASQADDRSLKVWRTLDWQLETS), 220-263 (GGTT…TNMD), 266-322 (GHRK…PLVV), and 326-367 (LFDK…DPLS). Residues 408-431 (QQQQQLDQKNATTRETSSASSVTG) form a disordered region. The segment covering 413 to 431 (LDQKNATTRETSSASSVTG) has biased composition (polar residues). Positions 421–479 (RETSSASSVTGVVNGESLEDIRKNLLKKQVETRTADGRRRITPLCIAQLDTGDFSTAFF) are interaction with ASF1A. Positions 421 to 727 (RETSSASSVT…RLKCNREGKE (307 aa)) are interaction with CCNA1. Residues 439–475 (EDIRKNLLKKQVETRTADGRRRITPLCIAQLDTGDFS) form a required for repression of histone gene transcription region. Low complexity-rich tracts occupy residues 494–507 (SSPSGQQLLPLDSS) and 540–556 (ATSTPAASSPSVLTTPS). The tract at residues 494 to 558 (SSPSGQQLLP…PSVLTTPSKI (65 aa)) is disordered. The residue at position 548 (Ser548) is a Phosphoserine. A Phosphothreonine modification is found at Thr554. The residue at position 556 (Ser556) is a Phosphoserine. Thr575 carries the post-translational modification Phosphothreonine. Residues Ser583, Ser608, Ser609, Ser610, Ser612, Ser659, and Ser673 each carry the phosphoserine modification. 2 interaction with PAX3 regions span residues 593–737 (KEQN…SRVL) and 738–826 (TAAG…SQIL). The interval 594–824 (EQNLVKELRS…LSGSDMTVSQ (231 aa)) is interaction with histone H2B. The segment covering 603-617 (SRELESSSDSDEKVH) has biased composition (basic and acidic residues). The tract at residues 603–623 (SRELESSSDSDEKVHLAKPSS) is disordered. Positions 736–1015 (VLTAAGSCDV…QEQLDILRDK (280 aa)) are interaction with histone H4.

It belongs to the WD repeat HIR1 family. In terms of assembly, interacts with CCNA1, HIRIP3 and NFU1/HIRIP5. Part of a complex which includes ASF1A, CABIN1, histone H3.3, histone H4 and UBN1. Interacts with histone H2B, histone H3-3B, PAX3 and PAX7. Post-translationally, sumoylated. Phosphorylated by CDK2/CCNA1 and CDK2/CCNE1 on Thr-554 in vitro. Also phosphorylated on Thr-554 in vivo. In terms of tissue distribution, expressed in cerebrum, cerebellum, heart, kidney, liver, lung and spleen.

It is found in the nucleus. Its subcellular location is the PML body. Its function is as follows. Required for the periodic repression of histone gene transcription during the cell cycle. Cooperates with ASF1A to promote replication-independent chromatin assembly. Required for the formation of senescence-associated heterochromatin foci (SAHF) and efficient senescence-associated cell cycle exit. This chain is Protein HIRA (Hira), found in Mus musculus (Mouse).